We begin with the raw amino-acid sequence, 307 residues long: N-acetylglucosamine-1-phosphotransferase subunit gamma (307 aa).

The N-terminal stretch at Met1–Ala24 is a signal peptide. The MRH domain occupies Gly69–Pro171. Cys71 and Cys84 are joined by a disulfide. 2 N-linked (GlcNAc...) asparagine glycosylation sites follow: Asn88 and Asn115. Cystine bridges form between Cys129–Cys157 and Cys142–Cys169. The DMAP1-binding domain maps to Val176–Ser279.

Homodimer; disulfide-linked. Hexamer of two alpha (GNPTAB), two beta (GNPTAB) and two gamma (GNPTG) subunits; disulfide-linked. The alpha and/or the beta subunits of the enzyme constitute the catalytic subunits. In terms of processing, cys-245 mediates the formation of the interchain disulfide bond for formation of the homodimer. Cys-142, Cys-157 and Cys-169 are involved in intramolecular disulfide bonds formation. Widely expressed. Highly expressed in the liver, intestine, brain, thymus, testis and ovary.

Its subcellular location is the secreted. It localises to the golgi apparatus. In terms of biological role, non-catalytic subunit of the N-acetylglucosamine-1-phosphotransferase complex, an enzyme that catalyzes the formation of mannose 6-phosphate (M6P) markers on high mannose type oligosaccharides in the Golgi apparatus. Binds and presents the high mannose glycans of the acceptor to the catalytic alpha and beta subunits (GNPTAB). Enhances the rate of N-acetylglucosamine-1-phosphate transfer to the oligosaccharides of acid hydrolase acceptors. The chain is N-acetylglucosamine-1-phosphotransferase subunit gamma (Gnptg) from Mus musculus (Mouse).